A 502-amino-acid chain; its full sequence is ATP synthase subunit alpha (502 aa).

169 to 176 (GDRQTGKT) contacts ATP.

This sequence belongs to the ATPase alpha/beta chains family. In terms of assembly, F-type ATPases have 2 components, CF(1) - the catalytic core - and CF(0) - the membrane proton channel. CF(1) has five subunits: alpha(3), beta(3), gamma(1), delta(1), epsilon(1). CF(0) has three main subunits: a(1), b(2) and c(9-12). The alpha and beta chains form an alternating ring which encloses part of the gamma chain. CF(1) is attached to CF(0) by a central stalk formed by the gamma and epsilon chains, while a peripheral stalk is formed by the delta and b chains.

The protein localises to the cell membrane. It catalyses the reaction ATP + H2O + 4 H(+)(in) = ADP + phosphate + 5 H(+)(out). Its function is as follows. Produces ATP from ADP in the presence of a proton gradient across the membrane. The alpha chain is a regulatory subunit. The polypeptide is ATP synthase subunit alpha (Clostridium perfringens (strain SM101 / Type A)).